We begin with the raw amino-acid sequence, 212 residues long: Nitrile hydratase subunit beta (212 aa).

It belongs to the nitrile hydratase subunit beta family. Heterodimer of an alpha and a beta chain.

The catalysed reaction is an aliphatic primary amide = an aliphatic nitrile + H2O. In terms of biological role, NHase catalyzes the hydration of various nitrile compounds to the corresponding amides. In Rhodococcus erythropolis (Arthrobacter picolinophilus), this protein is Nitrile hydratase subunit beta (nthB).